The chain runs to 554 residues: Glucose-6-phosphate isomerase (554 aa).

Glu359 acts as the Proton donor in catalysis. Catalysis depends on residues His390 and Lys518.

The protein belongs to the GPI family.

The protein resides in the cytoplasm. The enzyme catalyses alpha-D-glucose 6-phosphate = beta-D-fructose 6-phosphate. The protein operates within carbohydrate biosynthesis; gluconeogenesis. It functions in the pathway carbohydrate degradation; glycolysis; D-glyceraldehyde 3-phosphate and glycerone phosphate from D-glucose: step 2/4. In terms of biological role, catalyzes the reversible isomerization of glucose-6-phosphate to fructose-6-phosphate. This Pseudomonas syringae pv. syringae (strain B728a) protein is Glucose-6-phosphate isomerase.